Reading from the N-terminus, the 670-residue chain is Acetyl-coenzyme A synthetase (670 aa).

CoA contacts are provided by residues 205–208 and threonine 326; that span reads RRGR. Residues 402–404, 426–431, aspartate 517, arginine 532, and arginine 543 each bind ATP; these read GEP and STWWMT. Mg(2+) contacts are provided by histidine 556 and valine 559. Position 601 (arginine 601) interacts with CoA. At lysine 626 the chain carries N6-acetyllysine.

Belongs to the ATP-dependent AMP-binding enzyme family. Requires Mg(2+) as cofactor. Post-translationally, acetylated. Deacetylation by the SIR2-homolog deacetylase activates the enzyme.

The enzyme catalyses acetate + ATP + CoA = acetyl-CoA + AMP + diphosphate. Catalyzes the conversion of acetate into acetyl-CoA (AcCoA), an essential intermediate at the junction of anabolic and catabolic pathways. AcsA undergoes a two-step reaction. In the first half reaction, AcsA combines acetate with ATP to form acetyl-adenylate (AcAMP) intermediate. In the second half reaction, it can then transfer the acetyl group from AcAMP to the sulfhydryl group of CoA, forming the product AcCoA. This is Acetyl-coenzyme A synthetase from Pyrobaculum aerophilum (strain ATCC 51768 / DSM 7523 / JCM 9630 / CIP 104966 / NBRC 100827 / IM2).